A 244-amino-acid chain; its full sequence is Ubiquitin carboxyl-terminal hydrolase mug105 (244 aa).

C42 acts as the Nucleophile in catalysis. The active-site Proton acceptor is H165. D183 is an active-site residue.

It belongs to the peptidase C78 family. ZUFSP subfamily.

Its subcellular location is the cytoplasm. It carries out the reaction Thiol-dependent hydrolysis of ester, thioester, amide, peptide and isopeptide bonds formed by the C-terminal Gly of ubiquitin (a 76-residue protein attached to proteins as an intracellular targeting signal).. In terms of biological role, deubiquitinase with endodeubiquitinase activity that preferentially cleaves 'Lys-48'-linked polyubiquitin chains. Shows only weak activity against 'Lys-63' and 'Lys-11'-linked chains. Has a role in meiosis. The chain is Ubiquitin carboxyl-terminal hydrolase mug105 (mug105) from Schizosaccharomyces pombe (strain 972 / ATCC 24843) (Fission yeast).